We begin with the raw amino-acid sequence, 203 residues long: Akirin-2 (203 aa).

Ser-18 and Ser-21 each carry phosphoserine. The short motif at 22 to 27 is the Nuclear localization signal element; the sequence is PKRRRC. Ser-57 is modified (phosphoserine). The tract at residues 115–137 is disordered; sequence PHAFLLSGPASPGTPSGTSSPLK. A compositionally biased stretch (low complexity) spans 119–135; it reads LLSGPASPGTPSGTSSP. The SYVS motif motif lies at 200-203; that stretch reads SYVS.

Belongs to the akirin family. Homodimer. Interacts with IPO9; the interaction is direct. Associates with 20S and 26S proteasomes. Interacts with SMARCD1; promoting SWI/SNF complex recruitment. Interacts with NFKBIZ. Interacts with YWHAB. Polyubiquitinated. Polyubiquitination is dependent of UBR5 that extends pre-ubiquitinated AKIRIN2.

The protein resides in the nucleus. It is found in the cytoplasm. Its subcellular location is the membrane. Functionally, molecular adapter that acts as a bridge between a variety of multiprotein complexes, and which is involved in embryonic development, immunity, myogenesis and brain development. Plays a key role in nuclear protein degradation by promoting import of proteasomes into the nucleus: directly binds to fully assembled 20S proteasomes at one end and to nuclear import receptor IPO9 at the other end, bridging them together and mediating the import of pre-assembled proteasome complexes through the nuclear pore. Involved in innate immunity by regulating the production of interleukin-6 (IL6) downstream of Toll-like receptor (TLR): acts by bridging the NF-kappa-B inhibitor NFKBIZ and the SWI/SNF complex, leading to promote induction of IL6. Also involved in adaptive immunity by promoting B-cell activation. Involved in brain development: required for the survival and proliferation of cerebral cortical progenitor cells. Involved in myogenesis: required for skeletal muscle formation and skeletal development, possibly by regulating expression of muscle differentiation factors. The chain is Akirin-2 from Bos taurus (Bovine).